A 130-amino-acid polypeptide reads, in one-letter code: Acyl carrier protein 2, chloroplastic (130 aa).

Residues 1-48 (MASITGSSVSFKCAPLQSSFNSKNYALKSSVTFWRRTPVMPRGLSVSC) constitute a chloroplast transit peptide. The Carrier domain maps to 52–127 (PEMVTKVSDI…EAADMIEALQ (76 aa)). An O-(pantetheine 4'-phosphoryl)serine modification is found at serine 87.

The protein belongs to the acyl carrier protein (ACP) family. 4'-phosphopantetheine is transferred from CoA to a specific serine of apo-ACP by acpS. This modification is essential for activity because fatty acids are bound in thioester linkage to the sulfhydryl of the prosthetic group. As to expression, roots, leaves and seeds.

The protein resides in the plastid. Its subcellular location is the chloroplast. The protein operates within lipid metabolism; fatty acid biosynthesis. Carrier of the growing fatty acid chain in fatty acid biosynthesis. The sequence is that of Acyl carrier protein 2, chloroplastic (ACL1.2) from Spinacia oleracea (Spinach).